The primary structure comprises 1259 residues: Clustered mitochondria protein homolog (1259 aa).

A compositionally biased stretch (polar residues) spans 1-27 (MSQTNGNMEHSKETPQSQEVEQLTNGN). The interval 1–38 (MSQTNGNMEHSKETPQSQEVEQLTNGNHPEEQQEEEEN) is disordered. The 245-residue stretch at 324–568 (DITRSQESYL…RVTPLDVMWQ (245 aa)) folds into the Clu domain. Composition is skewed to basic and acidic residues over residues 612-628 (AEAE…SKEQ) and 634-647 (TEEK…QERV). 2 disordered regions span residues 612–647 (AEAE…QERV) and 881–908 (VVNG…PSRA). TPR repeat units follow at residues 982–1015 (AKLY…TERT), 1024–1057 (ILAY…WKII), and 1066–1099 (ITTM…CESL). Disordered stretches follow at residues 1192 to 1215 (TKVQ…ANAS) and 1229 to 1259 (EGGD…KSSA).

Belongs to the CLU family. May associate with the eukaryotic translation initiation factor 3 (eIF-3) complex.

The protein resides in the cytoplasm. MRNA-binding protein involved in proper cytoplasmic distribution of mitochondria. This Aspergillus clavatus (strain ATCC 1007 / CBS 513.65 / DSM 816 / NCTC 3887 / NRRL 1 / QM 1276 / 107) protein is Clustered mitochondria protein homolog.